We begin with the raw amino-acid sequence, 248 residues long: PF03932 family protein CutC (248 aa).

This sequence belongs to the CutC family. In terms of assembly, homodimer.

It is found in the cytoplasm. In Escherichia coli O17:K52:H18 (strain UMN026 / ExPEC), this protein is PF03932 family protein CutC.